The chain runs to 376 residues: Palmitoyl-[acyl-carrier-protein] 4-desaturase 2, chloroplastic (376 aa).

The N-terminal 33 residues, 1-33 (MELHLALRASPLPAADPGRRPPPPRGNFATNCT), are a transit peptide targeting the chloroplast. Residues Glu114, Glu149, His152, Glu202, Glu235, and His238 each coordinate Fe cation.

This sequence belongs to the fatty acid desaturase type 2 family. In terms of assembly, homodimer. Requires Fe(2+) as cofactor. As to expression, preferentially expressed in the flower labellum.

It localises to the plastid. The protein localises to the chloroplast stroma. The enzyme catalyses hexadecanoyl-[ACP] + 2 reduced [2Fe-2S]-[ferredoxin] + O2 + 2 H(+) = (4Z)-hexadecenoyl-[ACP] + 2 oxidized [2Fe-2S]-[ferredoxin] + 2 H2O. It catalyses the reaction octadecanoyl-[ACP] + 2 reduced [2Fe-2S]-[ferredoxin] + O2 + 2 H(+) = (9Z)-octadecenoyl-[ACP] + 2 oxidized [2Fe-2S]-[ferredoxin] + 2 H2O. It participates in lipid metabolism; fatty acid metabolism. Functionally, converts stearoyl-ACP to oleoyl-ACP by introduction of a cis double bond between carbons 9 and 10 of the acyl chain. Converts palmitoyl-ACP to (4Z)-hexadec-4-enoyl-ACP by introduction of a cis double bond between carbons 4 and 5 of the acyl chain. Catalyzes the desaturation of saturated fatty acid 18:0 and 16:0 to generate 18:1 (delta-9) and 16:1 (delta-4) intermediates, expected to give rise to 9-alkenes and 12-alkenes, respectively. The sequence is that of Palmitoyl-[acyl-carrier-protein] 4-desaturase 2, chloroplastic (SAD2) from Ophrys arachnitiformis subsp. archipelagi (Orchid).